The chain runs to 310 residues: tRNA dimethylallyltransferase (310 aa).

Position 13–20 (13–20 (GPTASGKT)) interacts with ATP. Residue 15 to 20 (TASGKT) coordinates substrate. Interaction with substrate tRNA stretches follow at residues 38 to 41 (DSAL), 162 to 166 (QRLSR), 243 to 248 (RCVGYR), and 276 to 283 (KRQITWLR).

It belongs to the IPP transferase family. Monomer. The cofactor is Mg(2+).

The catalysed reaction is adenosine(37) in tRNA + dimethylallyl diphosphate = N(6)-dimethylallyladenosine(37) in tRNA + diphosphate. In terms of biological role, catalyzes the transfer of a dimethylallyl group onto the adenine at position 37 in tRNAs that read codons beginning with uridine, leading to the formation of N6-(dimethylallyl)adenosine (i(6)A). In Vibrio campbellii (strain ATCC BAA-1116), this protein is tRNA dimethylallyltransferase.